The primary structure comprises 253 residues: MGKTLVFVNQKGGVGKTTSAINLGAYLALAGKKTLLVDFDPQGNMSSGLGLARGLTVYDLLAGKAHINSVLRTTPVHNLFAIPASIDLSGATVELVDEQDRELYLKKILAEVKDTYDFILIDCPPSLGILTLNGLAAANEVFIPLQCEYFALEGLTLLLQTVKRVQSGLNTALSIGGIFFTMYDTRTKLAQEVVKQVTTYFGDKVFNTIIPRNVKLSEAPSHGLPISSYDAQCAGARSYEKLAREIVARDGQR.

The ATP site is built by Lys11, Gly12, Gly13, Val14, Gly15, Lys16, Thr17, Thr18, Pro211, and Asn213. A Mg(2+)-binding site is contributed by Thr17.

Belongs to the ParA family.

The catalysed reaction is ATP + H2O = ADP + phosphate + H(+). Functionally, ATPase probably involved in chromosome partitioning. Cooperatively binds dsDNA, forming nucleoprotein filaments in a strictly ATP-dependent fashion. The chain is Chromosome-partitioning ATPase Soj from Treponema pallidum (strain Nichols).